A 933-amino-acid polypeptide reads, in one-letter code: Phosphoenolpyruvate carboxylase (933 aa).

Catalysis depends on residues histidine 164 and lysine 595.

The protein belongs to the PEPCase type 1 family. Mg(2+) is required as a cofactor.

The enzyme catalyses oxaloacetate + phosphate = phosphoenolpyruvate + hydrogencarbonate. Its function is as follows. Forms oxaloacetate, a four-carbon dicarboxylic acid source for the tricarboxylic acid cycle. This chain is Phosphoenolpyruvate carboxylase, found in Rhodopseudomonas palustris (strain HaA2).